We begin with the raw amino-acid sequence, 400 residues long: Tryptophan synthase beta chain (400 aa).

Position 90 is an N6-(pyridoxal phosphate)lysine (K90).

Belongs to the TrpB family. In terms of assembly, tetramer of two alpha and two beta chains. Requires pyridoxal 5'-phosphate as cofactor.

The catalysed reaction is (1S,2R)-1-C-(indol-3-yl)glycerol 3-phosphate + L-serine = D-glyceraldehyde 3-phosphate + L-tryptophan + H2O. It participates in amino-acid biosynthesis; L-tryptophan biosynthesis; L-tryptophan from chorismate: step 5/5. The beta subunit is responsible for the synthesis of L-tryptophan from indole and L-serine. This Bacillus velezensis (strain DSM 23117 / BGSC 10A6 / LMG 26770 / FZB42) (Bacillus amyloliquefaciens subsp. plantarum) protein is Tryptophan synthase beta chain.